A 90-amino-acid polypeptide reads, in one-letter code: UPF0386 protein Rru_A2144 (90 aa).

Belongs to the UPF0386 family.

In Rhodospirillum rubrum (strain ATCC 11170 / ATH 1.1.1 / DSM 467 / LMG 4362 / NCIMB 8255 / S1), this protein is UPF0386 protein Rru_A2144.